A 317-amino-acid chain; its full sequence is Acetyl-coenzyme A carboxylase carboxyl transferase subunit alpha (317 aa).

Residues 37-292 enclose the CoA carboxyltransferase C-terminal domain; the sequence is EINKKLEQTK…ADYITKGYNE (256 aa).

This sequence belongs to the AccA family. As to quaternary structure, acetyl-CoA carboxylase is a heterohexamer composed of biotin carboxyl carrier protein (AccB), biotin carboxylase (AccC) and two subunits each of ACCase subunit alpha (AccA) and ACCase subunit beta (AccD).

Its subcellular location is the cytoplasm. It catalyses the reaction N(6)-carboxybiotinyl-L-lysyl-[protein] + acetyl-CoA = N(6)-biotinyl-L-lysyl-[protein] + malonyl-CoA. Its pathway is lipid metabolism; malonyl-CoA biosynthesis; malonyl-CoA from acetyl-CoA: step 1/1. Its function is as follows. Component of the acetyl coenzyme A carboxylase (ACC) complex. First, biotin carboxylase catalyzes the carboxylation of biotin on its carrier protein (BCCP) and then the CO(2) group is transferred by the carboxyltransferase to acetyl-CoA to form malonyl-CoA. The chain is Acetyl-coenzyme A carboxylase carboxyl transferase subunit alpha from Flavobacterium johnsoniae (strain ATCC 17061 / DSM 2064 / JCM 8514 / BCRC 14874 / CCUG 350202 / NBRC 14942 / NCIMB 11054 / UW101) (Cytophaga johnsonae).